Here is a 305-residue protein sequence, read N- to C-terminus: MKHPNTIDIKALQSSFQIIGLLGKPRHDVTLQMHKNLFQWLLEKGYQVLVERPIGEQLGLSENYLASVDEIGQQAQLAIVIGGDGNVLGRARTLAKYDIALIGINRGNLGFLTDIDPKNAYSQLQACLEDGDCFVEERFILEASVERNGKIIARGNAVNEAVVHPAKIAHMIDFHVYINDKFAFSQRSDGLIISTPTGSTAYSLSAGGPILTPQLNAIALVPMFPHTLSSRPLVIDGDSKISIRFAEYNTSQLEVGCDSQVALEFSPDDIVHIQKSPDKLRLLHLKNYNYYKVLSSKLGWLRNSV.

Asp-84 (proton acceptor) is an active-site residue. Residues 84 to 85, 159 to 160, His-170, Arg-187, Asp-189, 200 to 205, and Gln-260 each bind NAD(+); these read DG, NE, and TAYSLS.

The protein belongs to the NAD kinase family. A divalent metal cation is required as a cofactor.

It localises to the cytoplasm. The enzyme catalyses NAD(+) + ATP = ADP + NADP(+) + H(+). Functionally, involved in the regulation of the intracellular balance of NAD and NADP, and is a key enzyme in the biosynthesis of NADP. Catalyzes specifically the phosphorylation on 2'-hydroxyl of the adenosine moiety of NAD to yield NADP. The chain is NAD kinase from Pasteurella multocida (strain Pm70).